Reading from the N-terminus, the 138-residue chain is MTKPIPRIGSRKNGRISSRKNGRRIPKGVIHVQASFNNTIVTVTDVRGRVVSWSSAGTSGFRGTRRGTPFAAQTAAGNAIRTVVDQGMQRAEVMIKGPGLGRDAALRAIRRSGLLLSFVRDVTPMPHNGCRPPKKRRV.

The tract at residues 1–24 is disordered; the sequence is MTKPIPRIGSRKNGRISSRKNGRR. The segment covering 9 to 24 has biased composition (basic residues); the sequence is GSRKNGRISSRKNGRR.

Belongs to the universal ribosomal protein uS11 family. In terms of assembly, part of the 30S ribosomal subunit.

Its subcellular location is the plastid. The protein localises to the chloroplast. The polypeptide is Small ribosomal subunit protein uS11c (Chloranthus spicatus (Chulantree)).